The primary structure comprises 318 residues: ATP phosphoribosyltransferase regulatory subunit (318 aa).

Belongs to the class-II aminoacyl-tRNA synthetase family. HisZ subfamily. As to quaternary structure, heteromultimer composed of HisG and HisZ subunits.

The protein resides in the cytoplasm. The protein operates within amino-acid biosynthesis; L-histidine biosynthesis; L-histidine from 5-phospho-alpha-D-ribose 1-diphosphate: step 1/9. Its function is as follows. Required for the first step of histidine biosynthesis. May allow the feedback regulation of ATP phosphoribosyltransferase activity by histidine. This is ATP phosphoribosyltransferase regulatory subunit from Lactococcus lactis subsp. cremoris (strain MG1363).